Reading from the N-terminus, the 893-residue chain is Protein kintoun (893 aa).

Disordered stretches follow at residues 211–243 (KNAT…VLPM), 372–395 (LSRE…EEAG), 587–719 (EQVH…SIDD), 781–821 (QRKK…QQTA), and 834–893 (PQNN…DEDM). A compositionally biased stretch (basic and acidic residues) spans 214 to 232 (TAEEREPHPLEHTYPKKPE). At S377 the chain carries Phosphoserine. Residues 594-603 (QQEEEEEEEQ) show a composition bias toward acidic residues. A compositionally biased stretch (basic residues) spans 609-626 (HQHKKGNKKQRKRNKKQR). A compositionally biased stretch (low complexity) spans 640 to 651 (QQQQHQKQQQQQ). Composition is skewed to polar residues over residues 656–667 (ENSSPESLNAGS) and 684–694 (FSECNDSSSVQ). Positions 709-719 (SISESSSSIDD) are enriched in low complexity. Residues 781-797 (QRKKNQKRRDCKLRAQQ) show a composition bias toward basic residues. S801 is modified (phosphoserine). Low complexity predominate over residues 836–848 (NNNNRSYSKNNKN). Residues 865–877 (NNEEDTKRNEADA) are compositionally biased toward basic and acidic residues. Positions 884–893 (EMDDDDDEDM) are enriched in acidic residues.

Belongs to the PIH1 family. Kintoun subfamily. As to quaternary structure, interacts with Pp1alpha-96A, Pp1-87B, Pp1-13C and flw.

It is found in the cytoplasm. Required for cytoplasmic pre-assembly of axonemal dyneins, thereby playing a central role in motility in cilia and flagella. Involved in pre-assembly of dynein arm complexes in the cytoplasm before intraflagellar transport loads them for the ciliary compartment. The sequence is that of Protein kintoun from Drosophila grimshawi (Hawaiian fruit fly).